Here is a 179-residue protein sequence, read N- to C-terminus: Methylated-DNA--protein-cysteine methyltransferase, inducible (179 aa).

Cys141 acts as the Nucleophile; methyl group acceptor in catalysis.

Belongs to the MGMT family.

The catalysed reaction is a 6-O-methyl-2'-deoxyguanosine in DNA + L-cysteinyl-[protein] = S-methyl-L-cysteinyl-[protein] + a 2'-deoxyguanosine in DNA. It catalyses the reaction a 4-O-methyl-thymidine in DNA + L-cysteinyl-[protein] = a thymidine in DNA + S-methyl-L-cysteinyl-[protein]. In terms of biological role, involved in the cellular defense against the biological effects of O6-methylguanine (O6-MeG) and O4-methylthymine (O4-MeT) in DNA. Repairs the methylated nucleobase in DNA by stoichiometrically transferring the methyl group to a cysteine residue in the enzyme. This is a suicide reaction: the enzyme is irreversibly inactivated. In Bacillus subtilis (strain 168), this protein is Methylated-DNA--protein-cysteine methyltransferase, inducible (adaB).